Here is a 420-residue protein sequence, read N- to C-terminus: Glucose-1-phosphate adenylyltransferase (420 aa).

Alpha-D-glucose 1-phosphate is bound by residues Y107, G172, 187–188 (EK), and S205.

This sequence belongs to the bacterial/plant glucose-1-phosphate adenylyltransferase family. In terms of assembly, homotetramer.

It catalyses the reaction alpha-D-glucose 1-phosphate + ATP + H(+) = ADP-alpha-D-glucose + diphosphate. Its pathway is glycan biosynthesis; glycogen biosynthesis. Functionally, involved in the biosynthesis of ADP-glucose, a building block required for the elongation reactions to produce glycogen. Catalyzes the reaction between ATP and alpha-D-glucose 1-phosphate (G1P) to produce pyrophosphate and ADP-Glc. The chain is Glucose-1-phosphate adenylyltransferase from Agrobacterium fabrum (strain C58 / ATCC 33970) (Agrobacterium tumefaciens (strain C58)).